The sequence spans 847 residues: MVISSNAFIVGRVGELDLITAGWHFLQRTMNNEDRRGFEKMISMPGFCVKKFEETYLLKRVNPFAQTEEGRIIKFNSSDCPCGKSQDVHNISAMKDQLSNFLDKWENVHEKFSLPTGSSELTTSKTPIDVDTKEQENRLKQKAEAAPKSTPIENHKKNIQALCKQNAVAEQCLWNVYHVSGKPAEKKEQRNDMDRNISGVSVKDYETLKNFEDKSPPQAENASSSKKDEPISVECTDETSSRLSPATDISHEMAEHGTPDSGMISDVSEIKVLPAGKIEKKLIKELNPEMMVGRDGRRYRQKLREAEKQATVEFKLENFEQTNGEAQSVENDILTGKEKRRLKDKLRKEKKEQSKLFVEKDLEKNKESSSASLSTNKLAESPTEADKNSNVIHTNIKPKDICIETEYPANNDNKKKSEVMFSSTVTNVFGRNENQTSFDVKEHTVDSFELLPGEYRISNFGQQMADTTSAEMTALGKMPQEAGEVKPTVREHSGANFLQRERNFPLSLKTTVIANSPEGDIEGKRLSKGQKRRARNKANKGVYVVNENGSHSIELLPGEYKLLELDENKKIQEFPIDTRHYMRDDQTGGGSKIVEQGQRTKKKKNFYVAGNLSKNILDNGKWLAYVIDDKNSDGVPRVGEVSTEEVQETIKLLDSKISHNAIQDNSCSEDFEFGSSSSTNFVTGSSRSLLPELDADFVRKTLADYEENATEDAAENNNEVFESASEELEMFMNSEGIAPNFHSEFAKKTSPLLVGNAEFKDFCSKYSNSKYDNKTISKLVKKYIDTRIVHHYERFKKLADRESHRIAKSWTKIYETSSYSLMVMLYTNSPSSSVGFSDLEEILFNDR.

Polar residues predominate over residues threonine 116–threonine 126. Disordered stretches follow at residues threonine 116–glutamate 153, leucine 208–proline 245, and aspartate 361–isoleucine 392. Basic and acidic residues predominate over residues isoleucine 128–alanine 145. Polar residues predominate over residues serine 368–leucine 378.

This is an uncharacterized protein from Caenorhabditis elegans.